The primary structure comprises 102 residues: Protein ORF28 (102 aa).

The chain crosses the membrane as a helical span at residues 28–48 (VIGLITVLFLLVIGACVYCCI).

It is found in the host membrane. This is Protein ORF28 (ORF28) from Homo sapiens (Human).